The following is a 196-amino-acid chain: Peptide deformylase (196 aa).

2 residues coordinate Fe cation: C103 and H145. Residue E146 is part of the active site. Fe cation is bound at residue H149.

The protein belongs to the polypeptide deformylase family. Fe(2+) serves as cofactor.

It catalyses the reaction N-terminal N-formyl-L-methionyl-[peptide] + H2O = N-terminal L-methionyl-[peptide] + formate. Removes the formyl group from the N-terminal Met of newly synthesized proteins. Requires at least a dipeptide for an efficient rate of reaction. N-terminal L-methionine is a prerequisite for activity but the enzyme has broad specificity at other positions. This Rhodococcus opacus (strain B4) protein is Peptide deformylase.